The sequence spans 173 residues: Cytochrome c-type biogenesis protein CcmE (173 aa).

At 1 to 8 (MNPRRKSR) the chain is on the cytoplasmic side. Residues 9–29 (FKLVIFVVLGIAIASGLMLYA) form a helical; Signal-anchor for type II membrane protein membrane-spanning segment. At 30-173 (LRQNIDLFYT…RDRQEKEGAK (144 aa)) the chain is on the periplasmic side. 2 residues coordinate heme: His131 and Tyr135. Residues 152–173 (GIEAADLKGESARDRQEKEGAK) are disordered. Positions 156–173 (ADLKGESARDRQEKEGAK) are enriched in basic and acidic residues.

This sequence belongs to the CcmE/CycJ family.

Its subcellular location is the cell inner membrane. Heme chaperone required for the biogenesis of c-type cytochromes. Transiently binds heme delivered by CcmC and transfers the heme to apo-cytochromes in a process facilitated by CcmF and CcmH. This Haemophilus influenzae (strain ATCC 51907 / DSM 11121 / KW20 / Rd) protein is Cytochrome c-type biogenesis protein CcmE.